The sequence spans 384 residues: MTDAAHSSQTGPVTELTKALIARPSVTPLDEGCQTLMAERLAAIGFNIEAMVFEDTTNMWARRGNTGPVFCFAGHTDVVPTGDLSRWHTPPFEPTIIDGYLYGRGAADMKGSLAAMVVATERFVAKHPNHPGSIAFLITSDEEGPFINGTTRVIDTLEARNEKITWALVGEPSSTLKLGDVVKNGRRGSLTANLTVKGVQGHVAYPHLADNPIHKAAPFLAELSQTHWDNGNAFFPPTSMQIANINGGTGASNVIPGALEVMFNFRYSTEVTAEILIERVETLLTAHELDYDIRWTFNGLPFLTGEGPLLDATRHAIRQVTGYDTDPQTTGGTSDGRFIAPTGAKVLELGPVNATIHKVNECVKVDDLEQLALCYEVILEQLLC.

Residue His-75 coordinates Zn(2+). Residue Asp-77 is part of the active site. Asp-108 is a Zn(2+) binding site. Catalysis depends on Glu-142, which acts as the Proton acceptor. The Zn(2+) site is built by Glu-143, Glu-171, and His-357.

It belongs to the peptidase M20A family. DapE subfamily. In terms of assembly, homodimer. The cofactor is Zn(2+). It depends on Co(2+) as a cofactor.

The enzyme catalyses N-succinyl-(2S,6S)-2,6-diaminopimelate + H2O = (2S,6S)-2,6-diaminopimelate + succinate. It functions in the pathway amino-acid biosynthesis; L-lysine biosynthesis via DAP pathway; LL-2,6-diaminopimelate from (S)-tetrahydrodipicolinate (succinylase route): step 3/3. Its function is as follows. Catalyzes the hydrolysis of N-succinyl-L,L-diaminopimelic acid (SDAP), forming succinate and LL-2,6-diaminopimelate (DAP), an intermediate involved in the bacterial biosynthesis of lysine and meso-diaminopimelic acid, an essential component of bacterial cell walls. The protein is Succinyl-diaminopimelate desuccinylase of Shewanella oneidensis (strain ATCC 700550 / JCM 31522 / CIP 106686 / LMG 19005 / NCIMB 14063 / MR-1).